We begin with the raw amino-acid sequence, 224 residues long: Large ribosomal subunit protein uL1 (224 aa).

It belongs to the universal ribosomal protein uL1 family. In terms of assembly, part of the 50S ribosomal subunit.

Functionally, binds directly to 23S rRNA. The L1 stalk is quite mobile in the ribosome, and is involved in E site tRNA release. Protein L1 is also a translational repressor protein, it controls the translation of the L11 operon by binding to its mRNA. The sequence is that of Large ribosomal subunit protein uL1 from Borrelia hermsii (strain HS1 / DAH).